The sequence spans 89 residues: Large ribosomal subunit protein bL27 (89 aa).

This sequence belongs to the bacterial ribosomal protein bL27 family.

The polypeptide is Large ribosomal subunit protein bL27 (Ruegeria sp. (strain TM1040) (Silicibacter sp.)).